The chain runs to 238 residues: Ribonuclease PH (238 aa).

Residues arginine 86 and 124–126 (GTR) each bind phosphate.

This sequence belongs to the RNase PH family. Homohexameric ring arranged as a trimer of dimers.

It carries out the reaction tRNA(n+1) + phosphate = tRNA(n) + a ribonucleoside 5'-diphosphate. Phosphorolytic 3'-5' exoribonuclease that plays an important role in tRNA 3'-end maturation. Removes nucleotide residues following the 3'-CCA terminus of tRNAs; can also add nucleotides to the ends of RNA molecules by using nucleoside diphosphates as substrates, but this may not be physiologically important. Probably plays a role in initiation of 16S rRNA degradation (leading to ribosome degradation) during starvation. The polypeptide is Ribonuclease PH (Shigella dysenteriae serotype 1 (strain Sd197)).